Here is a 231-residue protein sequence, read N- to C-terminus: NADH-ubiquinone oxidoreductase chain 4 (231 aa).

6 consecutive transmembrane segments (helical) span residues 1 to 21, 34 to 54, 61 to 80, 84 to 106, 118 to 138, and 169 to 189; these read PIAG…YGII, VFLP…LTCL, SLIA…AIMI, WGLS…LFCL, ILIL…WWLL, and TIIL…HMFL.

Belongs to the complex I subunit 4 family.

Its subcellular location is the mitochondrion membrane. The catalysed reaction is a ubiquinone + NADH + 5 H(+)(in) = a ubiquinol + NAD(+) + 4 H(+)(out). In terms of biological role, core subunit of the mitochondrial membrane respiratory chain NADH dehydrogenase (Complex I) that is believed to belong to the minimal assembly required for catalysis. Complex I functions in the transfer of electrons from NADH to the respiratory chain. The immediate electron acceptor for the enzyme is believed to be ubiquinone. In Porthidium nasutum (Hognosed pitviper), this protein is NADH-ubiquinone oxidoreductase chain 4 (MT-ND4).